The sequence spans 642 residues: Kinesin-2b (642 aa).

The Kinesin motor domain maps to 12–344 (NVMVMVRVRP…LRYADRAKQI (333 aa)). Residue 107-114 (GQTGSGKT) participates in ATP binding. 4 residues coordinate ADP: G110, G112, K113, and T114. Residue T114 participates in Mg(2+) binding. The stretch at 415-475 (VQSLRKNLDK…ERKAKERQLM (61 aa)) forms a coiled coil.

This sequence belongs to the TRAFAC class myosin-kinesin ATPase superfamily. Kinesin family. Kinesin II subfamily.

The protein localises to the cell projection. It localises to the cilium. It is found in the flagellum. Its subcellular location is the cytoplasm. The protein resides in the cytoskeleton. The protein localises to the flagellum axoneme. It localises to the flagellum basal body. Functionally, involved in anterograde intraflagellar transport (IFT). Involved in flagellar assembly. The chain is Kinesin-2b from Giardia intestinalis (strain ATCC 50803 / WB clone C6) (Giardia lamblia).